We begin with the raw amino-acid sequence, 430 residues long: Synaptotagmin-11 (430 aa).

The Vesicular portion of the chain corresponds to 1–15; sequence MAEITNIRPSFDVSP. Residues 16-36 traverse the membrane as a helical segment; sequence VAAGLIGASVLVVCVSVTVFV. The Cytoplasmic segment spans residues 37–430; that stretch reads WTCCHQQAEK…IAKWHSLSEY (394 aa). Positions 79–90 are enriched in basic and acidic residues; the sequence is RRDKDGPRRESG. Disordered regions lie at residues 79–120 and 132–152; these read RRDK…CMDQ and RSPM…SSPE. Serine 133 is subject to Phosphoserine. Residues 134-150 show a composition bias toward polar residues; it reads PMTSLTPGESKATSPSS. C2 domains follow at residues 156–278 and 290–425; these read MLGS…QLTR and SRGE…AKWH. Aspartate 249, serine 252, and aspartate 255 together coordinate Ca(2+).

This sequence belongs to the synaptotagmin family. In terms of assembly, homodimer. Can also form heterodimers. Interacts with PRKN. Interacts (via C2 2 domain) with AGO2 and SND1; the interaction with SND1 is direct. Interacts with KIF1A; the interaction increases in presence of calcium. The cofactor is Ca(2+). Ubiquitinated, at least by PRKN, and targeted to the proteasome complex for degradation. Ubiquitination is inhibited by ATP13A2. Expressed in cerebellun, cerebellar cortex, hippocampus, olfactory bulb and spinal cord (at protein level). Expressed by neurons, astrocytes and microglia (at protein level). Expressed in macrophages (at protein level).

Its subcellular location is the cytoplasmic vesicle membrane. The protein localises to the perikaryon. It is found in the golgi apparatus. The protein resides in the trans-Golgi network membrane. It localises to the recycling endosome membrane. Its subcellular location is the lysosome membrane. The protein localises to the cytoplasmic vesicle. It is found in the phagosome. The protein resides in the cell projection. It localises to the axon. Its subcellular location is the dendrite. The protein localises to the postsynaptic density. It is found in the clathrin-coated vesicle membrane. In terms of biological role, synaptotagmin family member involved in vesicular and membrane trafficking which does not bind Ca(2+). Inhibits clathrin-mediated and bulk endocytosis, functions to ensure precision in vesicle retrieval. Plays an important role in dopamine transmission by regulating endocytosis and the vesicle-recycling process. Essential component of a neuronal vesicular trafficking pathway that differs from the synaptic vesicle trafficking pathway but is crucial for development and synaptic plasticity. In macrophages and microglia, inhibits the conventional cytokine secretion, of at least IL6 and TNF, and phagocytosis. In astrocytes, regulates lysosome exocytosis, mechanism required for the repair of injured astrocyte cell membrane. Required for the ATP13A2-mediated regulation of the autophagy-lysosome pathway. The sequence is that of Synaptotagmin-11 from Mus musculus (Mouse).